The following is a 164-amino-acid chain: NADH-quinone oxidoreductase subunit I (164 aa).

4Fe-4S ferredoxin-type domains are found at residues 55–85 (LRRY…IDAE) and 95–124 (TRYD…EGPN). [4Fe-4S] cluster is bound by residues cysteine 65, cysteine 68, cysteine 71, cysteine 75, cysteine 104, cysteine 107, cysteine 110, and cysteine 114.

This sequence belongs to the complex I 23 kDa subunit family. NDH-1 is composed of 14 different subunits. Subunits NuoA, H, J, K, L, M, N constitute the membrane sector of the complex. [4Fe-4S] cluster is required as a cofactor.

The protein resides in the cell inner membrane. It catalyses the reaction a quinone + NADH + 5 H(+)(in) = a quinol + NAD(+) + 4 H(+)(out). In terms of biological role, NDH-1 shuttles electrons from NADH, via FMN and iron-sulfur (Fe-S) centers, to quinones in the respiratory chain. The immediate electron acceptor for the enzyme in this species is believed to be ubiquinone. Couples the redox reaction to proton translocation (for every two electrons transferred, four hydrogen ions are translocated across the cytoplasmic membrane), and thus conserves the redox energy in a proton gradient. This Roseobacter denitrificans (strain ATCC 33942 / OCh 114) (Erythrobacter sp. (strain OCh 114)) protein is NADH-quinone oxidoreductase subunit I.